The primary structure comprises 231 residues: Large ribosomal subunit protein uL1 (231 aa).

This sequence belongs to the universal ribosomal protein uL1 family. Part of the 50S ribosomal subunit.

Its function is as follows. Binds directly to 23S rRNA. The L1 stalk is quite mobile in the ribosome, and is involved in E site tRNA release. Functionally, protein L1 is also a translational repressor protein, it controls the translation of the L11 operon by binding to its mRNA. In Caldanaerobacter subterraneus subsp. tengcongensis (strain DSM 15242 / JCM 11007 / NBRC 100824 / MB4) (Thermoanaerobacter tengcongensis), this protein is Large ribosomal subunit protein uL1.